The chain runs to 346 residues: 4-hydroxy-2-oxovalerate aldolase 2 (346 aa).

The Pyruvate carboxyltransferase domain occupies 8 to 260; that stretch reads VTVHDMTLRD…ETGVDVFKIQ (253 aa). Residue 16-17 participates in substrate binding; that stretch reads RD. Asp-17 contributes to the Mn(2+) binding site. Catalysis depends on His-20, which acts as the Proton acceptor. Residues Ser-170 and His-199 each contribute to the substrate site. The Mn(2+) site is built by His-199 and His-201. Tyr-290 lines the substrate pocket.

It belongs to the 4-hydroxy-2-oxovalerate aldolase family.

It catalyses the reaction (S)-4-hydroxy-2-oxopentanoate = acetaldehyde + pyruvate. This Metapseudomonas furukawaii (Pseudomonas furukawaii) protein is 4-hydroxy-2-oxovalerate aldolase 2 (bphX3).